A 393-amino-acid chain; its full sequence is S-adenosylmethionine synthase (393 aa).

Residue His16 participates in ATP binding. Asp18 contacts Mg(2+). Glu44 contacts K(+). L-methionine-binding residues include Glu57 and Gln100. The tract at residues Gln100–His110 is flexible loop. ATP contacts are provided by residues Asp167–Lys169, Arg238–Phe239, Asp247, Arg253–Lys254, Ala270, and Lys274. L-methionine is bound at residue Asp247. Position 278 (Lys278) interacts with L-methionine.

The protein belongs to the AdoMet synthase family. Homotetramer; dimer of dimers. Mg(2+) serves as cofactor. Requires K(+) as cofactor.

The protein localises to the cytoplasm. The catalysed reaction is L-methionine + ATP + H2O = S-adenosyl-L-methionine + phosphate + diphosphate. It participates in amino-acid biosynthesis; S-adenosyl-L-methionine biosynthesis; S-adenosyl-L-methionine from L-methionine: step 1/1. Catalyzes the formation of S-adenosylmethionine (AdoMet) from methionine and ATP. The overall synthetic reaction is composed of two sequential steps, AdoMet formation and the subsequent tripolyphosphate hydrolysis which occurs prior to release of AdoMet from the enzyme. The chain is S-adenosylmethionine synthase from Paracidovorax citrulli (strain AAC00-1) (Acidovorax citrulli).